The primary structure comprises 362 residues: Protein RecA (362 aa).

77–84 (GPESSGKT) serves as a coordination point for ATP.

The protein belongs to the RecA family.

The protein resides in the cytoplasm. Can catalyze the hydrolysis of ATP in the presence of single-stranded DNA, the ATP-dependent uptake of single-stranded DNA by duplex DNA, and the ATP-dependent hybridization of homologous single-stranded DNAs. It interacts with LexA causing its activation and leading to its autocatalytic cleavage. The sequence is that of Protein RecA from Rhizobium etli (strain ATCC 51251 / DSM 11541 / JCM 21823 / NBRC 15573 / CFN 42).